A 496-amino-acid polypeptide reads, in one-letter code: Glutamyl-tRNA(Gln) amidotransferase subunit A (496 aa).

Catalysis depends on charge relay system residues Lys79 and Ser159. Ser183 serves as the catalytic Acyl-ester intermediate.

This sequence belongs to the amidase family. GatA subfamily. In terms of assembly, heterotrimer of A, B and C subunits.

It catalyses the reaction L-glutamyl-tRNA(Gln) + L-glutamine + ATP + H2O = L-glutaminyl-tRNA(Gln) + L-glutamate + ADP + phosphate + H(+). Its function is as follows. Allows the formation of correctly charged Gln-tRNA(Gln) through the transamidation of misacylated Glu-tRNA(Gln) in organisms which lack glutaminyl-tRNA synthetase. The reaction takes place in the presence of glutamine and ATP through an activated gamma-phospho-Glu-tRNA(Gln). The sequence is that of Glutamyl-tRNA(Gln) amidotransferase subunit A from Ruegeria pomeroyi (strain ATCC 700808 / DSM 15171 / DSS-3) (Silicibacter pomeroyi).